Here is a 518-residue protein sequence, read N- to C-terminus: Allene oxide synthase, chloroplastic (518 aa).

The transit peptide at 1–33 (MASISTPFPISLHPKTVRSKPLKFRVLTRPIKA) directs the protein to the chloroplast. Positions 133, 164, and 168 each coordinate heme b. Asparagine 321 and threonine 389 together coordinate (13S)-hydroperoxy-(9Z,11E)-octadecadienoate. 2 residues coordinate (13S)-hydroperoxy-(9Z,11E,15Z)-octadecatrienoate: asparagine 321 and threonine 389. Positions 469 and 471 each coordinate heme b.

This sequence belongs to the cytochrome P450 family. It depends on heme b as a cofactor.

The protein resides in the plastid. It is found in the chloroplast. The protein localises to the plastoglobule. It catalyses the reaction (13S)-hydroperoxy-(9Z,11E,15Z)-octadecatrienoate = (9Z,13S,15Z)-12,13-epoxyoctadeca-9,11,15-trienoate + H2O. The catalysed reaction is (13S)-hydroperoxy-(9Z,11E)-octadecadienoate = (9Z,13S)-12,13-epoxyoctadeca-9,11-dienoate + H2O. It functions in the pathway lipid metabolism; oxylipin biosynthesis. Functionally, cytochrome P450 enzyme involved in the biosynthesis of oxylipin jasmonates, important phytohormones acting as growth regulators and signaling molecules for plant defense. Functions as an allene oxide synthase that converts hydroperoxy fatty acids to unstable allene epoxides. Catalyzes the dehydration of 13-HPOTE ((13S)-hydroperoxy-(9Z,11E,15Z)-octadecatrienoate), as well as 13-HPODE ((13S)-hydroperoxy-(9Z,11E)-octadecadienoate). The chain is Allene oxide synthase, chloroplastic (CYP74A) from Arabidopsis thaliana (Mouse-ear cress).